We begin with the raw amino-acid sequence, 323 residues long: Transcription factor MYB56 (323 aa).

Over residues 1-14 (MNPNLLEKDLRGKE) the composition is skewed to basic and acidic residues. The interval 1 to 84 (MNPNLLEKDL…EKSLRMRGKS (84 aa)) is disordered. A compositionally biased stretch (polar residues) spans 27 to 60 (NFRSLPNSHTAACKTSLNNPSISRNHPHNKSASV). Residues 66-78 (EHGNERGENEKSL) are compositionally biased toward basic and acidic residues. 2 HTH myb-type domains span residues 88-139 (TKVC…FNQL) and 140-194 (DPRI…ARRT). 2 DNA-binding regions (H-T-H motif) span residues 116–138 (WNLISNHLLGRSGKSCRLRWFNQ) and 167–190 (WALISRLFPGRTDNAVKNHWHVIM). A disordered region spans residues 192–217 (RRTRESQRQRQQPPPTLSRDAEMTVS).

Forms homodimer. Interacts with the dephosphorylated active form of BES1 in the nucleus of quiescent center (QC) cells. Interacts with BPM1, BPM2, BPM3, BPM4, BPM5 and BPM6 at the promoter of FLOWERING LOCUS T (FT). As to expression, mostly expressed in flowers (at protein level) and siliques, and, to a lower extent, in roots, stems and leaves. Expressed in embryos (e.g. heart and torpedo stages) and cotyledons, and, at low levels, in roots and inflorescence. Accumulates specifically in root apical meristem quiescent center (QC) and vascular initial cells.

It localises to the nucleus. Its subcellular location is the cytoplasm. The protein resides in the cytosol. Its function is as follows. Acts as a cell-specific local repressor of quiescent center (QC) self-renewal by cell divisions in the primary root. Counteracts brassinosteroid (BR)-mediated cell division in the QC cells. Regulates maternally seed size, especially before the heart stage, promoting both endothelial cells expansion and cell number in the outer integument layer of the seed coat. Modulates the expression of genes involved in cell wall metabolism such as cell division and expansion. Negative regulator of flowering via the repression of FT transcription. In Arabidopsis thaliana (Mouse-ear cress), this protein is Transcription factor MYB56.